A 107-amino-acid chain; its full sequence is Theromyzin (107 aa).

A signal peptide spans 1 to 21 (MHAKIILALFLGMTAFLAVQA).

In terms of tissue distribution, coelomic liquid (at protein level). Expressed in large fat cells in contact with coelomic cavities, in intestinal epithelia and at the epidermis level.

The protein resides in the secreted. Its function is as follows. Has bacteriostatic activity against M.luteus. No activity toward E.coli and F.oxysporum. This is Theromyzin from Theromyzon tessulatum (Duck leech).